Consider the following 188-residue polypeptide: Meiotically up-regulated gene 94 protein (188 aa).

The protein localises to the cytoplasm. It localises to the nucleus. In terms of biological role, has a role in meiosis. The polypeptide is Meiotically up-regulated gene 94 protein (mug94) (Schizosaccharomyces pombe (strain 972 / ATCC 24843) (Fission yeast)).